The following is a 3078-amino-acid chain: Probable polyketide synthase 44 (3078 aa).

The region spanning 10 to 435 is the Ketosynthase family 3 (KS3) domain; sequence DNDVAIIGIG…GSNACLILTE (426 aa). Catalysis depends on for beta-ketoacyl synthase activity residues cysteine 175, histidine 320, and histidine 358. The interval 627 to 660 is acyl/malonyl transferase; that stretch reads GILASISIGHSLGEVSSAVCSGMIDLETGCFIIY. The active-site For acyl/malonyl transferase activity is the serine 637. The tract at residues 952 to 1072 is N-terminal hotdog fold; it reads TNHLGYRNER…GRLSTTKHND (121 aa). Positions 952–1239 constitute a PKS/mFAS DH domain; the sequence is TNHLGYRNER…YTQLTPYKNQ (288 aa). Histidine 984 functions as the Proton acceptor; for dehydratase activity in the catalytic mechanism. The C-terminal hotdog fold stretch occupies residues 1088–1239; that stretch reads NFVTIQKKEL…YTQLTPYKNQ (152 aa). The active-site Proton donor; for dehydratase activity is aspartate 1150. Residues 2080-2119 adopt a coiled-coil conformation; sequence LENIKTDLSNKNDNNNNNNNNNNDNKESNIKELLDNDDDE. Residues 2087-2108 are disordered; sequence LSNKNDNNNNNNNNNNDNKESN. Residues 2090 to 2102 are compositionally biased toward low complexity; that stretch reads KNDNNNNNNNNNN. The 79-residue stretch at 2558–2636 folds into the Carrier domain; the sequence is SDDLSIREQI…QLIQSVTDAM (79 aa). The residue at position 2596 (serine 2596) is an O-(pantetheine 4'-phosphoryl)serine. The helical transmembrane segment at 2694–2714 threads the bilayer; it reads NTVFLTGSSGFIGIYILFYLI.

The cofactor is pantetheine 4'-phosphate.

It is found in the membrane. Functionally, probable polyketide synthase. The protein is Probable polyketide synthase 44 (pks44) of Dictyostelium discoideum (Social amoeba).